Consider the following 210-residue polypeptide: DNA-directed RNA polymerases I, II, and III subunit RPABC1 (210 aa).

Methionine 1 is subject to N-acetylmethionine. A Glycyl lysine isopeptide (Lys-Gly) (interchain with G-Cter in SUMO2) cross-link involves residue lysine 81.

Belongs to the archaeal Rpo5/eukaryotic RPB5 RNA polymerase subunit family. As to quaternary structure, component of the RNA polymerase I (Pol I), RNA polymerase II (Pol II) and RNA polymerase III (Pol III) complexes consisting of at least 13, 12 and 17 subunits, respectively. Pol I complex consists of a ten-subunit catalytic core composed of POLR1A/RPA1, POLR1B/RPA2, POLR1C/RPAC1, POLR1D/RPAC2, POLR1H/RPA12, POLR2E/RPABC1, POLR2F/RPABC2, POLR2H/RPABC3, POLR2K/RPABC4 and POLR2L/RPABC5; a mobile stalk subunit POLR1F/RPA43 protruding from the core and additional subunits homologous to general transcription factors POLR1E/RPA49 and POLR1G/RPA34. Part of Pol I pre-initiation complex (PIC), in which Pol I core assembles with RRN3 and promoter-bound UTBF and SL1/TIF-IB complex. Pol II complex contains a ten-subunit catalytic core composed of POLR2A/RPB1, POLR2B/RPB2, POLR2C/RPB3, POLR2I/RPB9, POLR2J/RPB11, POLR2E/RPABC1, POLR2F/RPABC2, POLR2H/RPABC3, POLR2K/RPABC4 and POLR2L/RPABC5 and a mobile stalk composed of two subunits POLR2D/RPB4 and POLR2G/RPB7. Part of Pol II(G) complex, in which Pol II core associates with an additional subunit POLR2M; unlike conventional Pol II, Pol II(G) functions as a transcriptional repressor. Part of TBP-based Pol II pre-initiation complex (PIC), in which Pol II core assembles with general transcription factors and other specific initiation factors including GTF2E1, GTF2E2, GTF2F1, GTF2F2, TCEA1, ERCC2, ERCC3, GTF2H2, GTF2H3, GTF2H4, GTF2H5, GTF2A1, GTF2A2, GTF2B and TBP; this large multi-subunit PIC complex mediates DNA unwinding and targets Pol II core to the transcription start site where the first phosphodiester bond forms. In Pol II complex, this subunit is present in 2-fold molar excess over the other subunits. Pol III complex consists of a ten-subunit catalytic core composed of POLR3A/RPC1, POLR3B/RPC2, POLR1C/RPAC1, POLR1D/RPAC2, POLR3K/RPC10, POLR2E/RPABC1, POLR2F/RPABC2, POLR2H/RPABC3, POLR2K/RPABC4 and POLR2L/RPABC5; a mobile stalk composed of two subunits POLR3H/RPC8 and CRCP/RPC9, protruding from the core and functioning primarily in transcription initiation; and additional subunits homologous to general transcription factors of the RNA polymerase II machinery, POLR3C/RPC3-POLR3F/RPC6-POLR3G/RPC7 heterotrimer required for transcription initiation and POLR3D/RPC4-POLR3E/RPC5 heterodimer involved in both transcription initiation and termination. Component of the PAQosome complex which is responsible for the biogenesis of several protein complexes and which consists of R2TP complex members RUVBL1, RUVBL2, RPAP3 and PIH1D1, URI complex members PFDN2, PFDN6, PDRG1, UXT and URI1 as well as ASDURF, POLR2E and DNAAF10/WDR92. Interacts with URI1. In terms of assembly, (Microbial infection) Interacts with HBV protein X.

It is found in the nucleus. It localises to the nucleolus. DNA-dependent RNA polymerase catalyzes the transcription of DNA into RNA using the four ribonucleoside triphosphates as substrates. Common component of RNA polymerases I, II and III which synthesize ribosomal RNA precursors, mRNA precursors and many functional non-coding RNAs, and small RNAs, such as 5S rRNA and tRNAs, respectively. Pol II is the central component of the basal RNA polymerase II transcription machinery. Pols are composed of mobile elements that move relative to each other. In Pol II, POLR2E/RPABC1 is part of the lower jaw surrounding the central large cleft and thought to grab the incoming DNA template. In Homo sapiens (Human), this protein is DNA-directed RNA polymerases I, II, and III subunit RPABC1.